The primary structure comprises 212 residues: uncharacterized protein (212 aa).

S-adenosyl-L-methionine-binding residues include G53, E74, and D97.

Belongs to the methyltransferase superfamily. YrrT family.

In terms of biological role, could be a S-adenosyl-L-methionine-dependent methyltransferase. This is an uncharacterized protein from Bacillus thuringiensis (strain Al Hakam).